Here is a 100-residue protein sequence, read N- to C-terminus: Urease subunit gamma (100 aa).

Belongs to the urease gamma subunit family. Heterotrimer of UreA (gamma), UreB (beta) and UreC (alpha) subunits. Three heterotrimers associate to form the active enzyme.

It localises to the cytoplasm. The enzyme catalyses urea + 2 H2O + H(+) = hydrogencarbonate + 2 NH4(+). It participates in nitrogen metabolism; urea degradation; CO(2) and NH(3) from urea (urease route): step 1/1. The chain is Urease subunit gamma from Mycolicibacterium gilvum (strain PYR-GCK) (Mycobacterium gilvum (strain PYR-GCK)).